Reading from the N-terminus, the 122-residue chain is Small ribosomal subunit protein uS13 (122 aa).

The disordered stretch occupies residues 94–122 (RGLPVRGQKTKTNARTRKGPRKTVAGKRK).

This sequence belongs to the universal ribosomal protein uS13 family. Part of the 30S ribosomal subunit. Forms a loose heterodimer with protein S19. Forms two bridges to the 50S subunit in the 70S ribosome.

Functionally, located at the top of the head of the 30S subunit, it contacts several helices of the 16S rRNA. In the 70S ribosome it contacts the 23S rRNA (bridge B1a) and protein L5 of the 50S subunit (bridge B1b), connecting the 2 subunits; these bridges are implicated in subunit movement. Contacts the tRNAs in the A and P-sites. The sequence is that of Small ribosomal subunit protein uS13 from Syntrophotalea carbinolica (strain DSM 2380 / NBRC 103641 / GraBd1) (Pelobacter carbinolicus).